The sequence spans 148 residues: Large ribosomal subunit protein uL15 (148 aa).

The segment at 12-52 (ERKNRKRVGRGGGSGWGGTSGKGHKGQNARSGGGVPAWFEG) is disordered. The span at 21–32 (RGGGSGWGGTSG) shows a compositional bias: gly residues.

Belongs to the universal ribosomal protein uL15 family. Part of the 50S ribosomal subunit.

Its function is as follows. Binds to the 23S rRNA. The sequence is that of Large ribosomal subunit protein uL15 from Maridesulfovibrio salexigens (strain ATCC 14822 / DSM 2638 / NCIMB 8403 / VKM B-1763) (Desulfovibrio salexigens).